A 102-amino-acid polypeptide reads, in one-letter code: NADH-quinone oxidoreductase subunit K (102 aa).

3 helical membrane passes run 5 to 25, 30 to 50, and 62 to 82; these read LGHYLAVAAMLFTLGILGIFL, IIVILMSVELILLAVNINLVA, and VFALLVLTVAAAEAAIGLAVL.

This sequence belongs to the complex I subunit 4L family. As to quaternary structure, NDH-1 is composed of 14 different subunits. Subunits NuoA, H, J, K, L, M, N constitute the membrane sector of the complex.

It is found in the cell inner membrane. The enzyme catalyses a quinone + NADH + 5 H(+)(in) = a quinol + NAD(+) + 4 H(+)(out). In terms of biological role, NDH-1 shuttles electrons from NADH, via FMN and iron-sulfur (Fe-S) centers, to quinones in the respiratory chain. The immediate electron acceptor for the enzyme in this species is believed to be ubiquinone. Couples the redox reaction to proton translocation (for every two electrons transferred, four hydrogen ions are translocated across the cytoplasmic membrane), and thus conserves the redox energy in a proton gradient. This Bradyrhizobium sp. (strain BTAi1 / ATCC BAA-1182) protein is NADH-quinone oxidoreductase subunit K.